Here is a 123-residue protein sequence, read N- to C-terminus: Putative membrane protein insertion efficiency factor (123 aa).

The disordered stretch occupies residues 1 to 23 (MGSCGGKHTGKGAPKPYSRNFTD).

The protein belongs to the UPF0161 family.

It localises to the cell inner membrane. Functionally, could be involved in insertion of integral membrane proteins into the membrane. The polypeptide is Putative membrane protein insertion efficiency factor (Brucella abortus (strain 2308)).